The following is a 418-amino-acid chain: UDP-N-acetylglucosamine 1-carboxyvinyltransferase (418 aa).

Phosphoenolpyruvate is bound at residue 22–23 (KN). Arginine 92 contacts UDP-N-acetyl-alpha-D-glucosamine. Cysteine 116 acts as the Proton donor in catalysis. Residue cysteine 116 is modified to 2-(S-cysteinyl)pyruvic acid O-phosphothioketal. Residues aspartate 306 and isoleucine 328 each coordinate UDP-N-acetyl-alpha-D-glucosamine.

Belongs to the EPSP synthase family. MurA subfamily.

It localises to the cytoplasm. The enzyme catalyses phosphoenolpyruvate + UDP-N-acetyl-alpha-D-glucosamine = UDP-N-acetyl-3-O-(1-carboxyvinyl)-alpha-D-glucosamine + phosphate. The protein operates within cell wall biogenesis; peptidoglycan biosynthesis. Its function is as follows. Cell wall formation. Adds enolpyruvyl to UDP-N-acetylglucosamine. The sequence is that of UDP-N-acetylglucosamine 1-carboxyvinyltransferase from Shewanella amazonensis (strain ATCC BAA-1098 / SB2B).